Here is a 549-residue protein sequence, read N- to C-terminus: Glucose-6-phosphate isomerase (549 aa).

Glu-353 serves as the catalytic Proton donor. Active-site residues include His-384 and Lys-513.

Belongs to the GPI family.

Its subcellular location is the cytoplasm. The catalysed reaction is alpha-D-glucose 6-phosphate = beta-D-fructose 6-phosphate. Its pathway is carbohydrate biosynthesis; gluconeogenesis. It participates in carbohydrate degradation; glycolysis; D-glyceraldehyde 3-phosphate and glycerone phosphate from D-glucose: step 2/4. Its function is as follows. Catalyzes the reversible isomerization of glucose-6-phosphate to fructose-6-phosphate. In Brucella ovis (strain ATCC 25840 / 63/290 / NCTC 10512), this protein is Glucose-6-phosphate isomerase.